A 374-amino-acid polypeptide reads, in one-letter code: Protein RecA (374 aa).

Residue Gly-66–Thr-73 participates in ATP binding. Residues Leu-327 to Ser-374 form a disordered region. Low complexity predominate over residues Thr-338 to Ser-374.

Belongs to the RecA family.

It is found in the cytoplasm. Can catalyze the hydrolysis of ATP in the presence of single-stranded DNA, the ATP-dependent uptake of single-stranded DNA by duplex DNA, and the ATP-dependent hybridization of homologous single-stranded DNAs. It interacts with LexA causing its activation and leading to its autocatalytic cleavage. The polypeptide is Protein RecA (Streptomyces lividans).